A 694-amino-acid chain; its full sequence is Frizzled-2 (694 aa).

The first 22 residues, Met1–Ala22, serve as a signal peptide directing secretion. Over Asp23–Asp315 the chain is Extracellular. The 122-residue stretch at Asp59 to Gln180 folds into the FZ domain. Intrachain disulfides connect Cys64/Cys125, Cys72/Cys118, Cys109/Cys147, Cys136/Cys177, and Cys140/Cys164. The N-linked (GlcNAc...) asparagine glycan is linked to Asn78. The disordered stretch occupies residues Asn175–Cys253. Gly residues predominate over residues Gly187–Ser224. The N-linked (GlcNAc...) asparagine glycan is linked to Asn288. A helical transmembrane segment spans residues Phe316–Leu336. Over Thr337 to Pro352 the chain is Cytoplasmic. A helical transmembrane segment spans residues Ile353–Leu373. Residues Gln374–Leu397 lie on the Extracellular side of the membrane. Residues Val398 to Phe418 form a helical membrane-spanning segment. Residues Thr419–Tyr439 are Cytoplasmic-facing. Residues Phe440 to Ala460 traverse the membrane as a helical segment. At Val461 to Thr482 the chain is on the extracellular side. Residues Phe483–Phe503 form a helical membrane-spanning segment. The Cytoplasmic portion of the chain corresponds to Val504–Arg534. The chain crosses the membrane as a helical span at residues Ile535–Tyr555. Residues Glu556–Ser584 are Extracellular-facing. A helical transmembrane segment spans residues Val585–Trp605. At Ser606 to Val694 the chain is on the cytoplasmic side. The Lys-Thr-X-X-X-Trp motif, mediates interaction with the PDZ domain of Dvl family members signature appears at Lys608–Trp613. The PDZ-binding motif lies at Ser692–Val694.

This sequence belongs to the G-protein coupled receptor Fz/Smo family. In terms of assembly, interacts with ATP6AP2.

The protein localises to the cell membrane. Receptor for Wnt proteins. Most of frizzled receptors are coupled to the beta-catenin canonical signaling pathway, which leads to the activation of disheveled proteins, inhibition of GSK-3 kinase, nuclear accumulation of beta-catenin and activation of Wnt target genes. A second signaling pathway involving PKC and calcium fluxes has been seen for some family members, but it is not yet clear if it represents a distinct pathway or if it can be integrated in the canonical pathway, as PKC seems to be required for Wnt-mediated inactivation of GSK-3 kinase. Both pathways seem to involve interactions with G-proteins. Required to coordinate the cytoskeletons of epidermal cells to produce a parallel array of cuticular hairs and bristles. This chain is Frizzled-2 (fz2), found in Drosophila melanogaster (Fruit fly).